A 233-amino-acid polypeptide reads, in one-letter code: 2,3-bisphosphoglycerate-dependent phosphoglycerate mutase (233 aa).

Substrate contacts are provided by residues 8 to 15 (RHGQSLWN), 21 to 22 (TG), Arg60, 116 to 119 (ERYY), Lys127, 143 to 144 (RR), and 187 to 188 (GN). His9 functions as the Tele-phosphohistidine intermediate in the catalytic mechanism. Glu116 (proton donor/acceptor) is an active-site residue.

The protein belongs to the phosphoglycerate mutase family. BPG-dependent PGAM subfamily.

It carries out the reaction (2R)-2-phosphoglycerate = (2R)-3-phosphoglycerate. It functions in the pathway carbohydrate degradation; glycolysis; pyruvate from D-glyceraldehyde 3-phosphate: step 3/5. In terms of biological role, catalyzes the interconversion of 2-phosphoglycerate and 3-phosphoglycerate. The polypeptide is 2,3-bisphosphoglycerate-dependent phosphoglycerate mutase (Gloeothece citriformis (strain PCC 7424) (Cyanothece sp. (strain PCC 7424))).